Here is a 268-residue protein sequence, read N- to C-terminus: Cell division cycle-associated protein 3 (268 aa).

2 disordered regions span residues 1 to 232 (MGSA…SELK) and 247 to 268 (GRAWEQGQDHDKENQHFPLVES). Ser-29 and Ser-31 each carry phosphoserine. Thr-37 carries the post-translational modification Phosphothreonine. 3 positions are modified to phosphoserine: Ser-44, Ser-64, and Ser-68. Positions 56–66 (EGLKHAQDSDP) are enriched in basic and acidic residues. Thr-76 is subject to Phosphothreonine. Residues Ser-87 and Ser-94 each carry the phosphoserine modification. Residues 91–120 (KQLSEVFETEDSKSNLPPEPVLPPEAPLSS) are F-box-like. The span at 107–116 (PPEPVLPPEA) shows a compositional bias: pro residues. Residues 117–126 (PLSSELDLPL) are compositionally biased toward low complexity. Polar residues-rich tracts occupy residues 128–149 (TQLSVEEQMPPWNQTEFPSKQV), 158–169 (PTETPVASQSSD), and 178–194 (PRSSGSMRNRWKPNSSK). Ser-199 carries the phosphoserine modification. Phosphothreonine is present on Thr-202. A compositionally biased stretch (polar residues) spans 205–215 (QDDNSPGTLTL). Ser-209 bears the Phosphoserine mark. Thr-212 is modified (phosphothreonine). Residues 258 to 260 (KEN) carry the KEN box motif.

Interacts with SKP1. Part of a SCF (SKP1-cullin-F-box) protein ligase complex. In terms of processing, ubiquitinated and degraded by the APC/C-Cdh1 complex.

It is found in the cytoplasm. The protein resides in the cytosol. It functions in the pathway protein modification; protein ubiquitination. Functionally, F-box-like protein which is required for entry into mitosis. Acts by participating in E3 ligase complexes that mediate the ubiquitination and degradation of WEE1 kinase at G2/M phase. This chain is Cell division cycle-associated protein 3 (CDCA3), found in Homo sapiens (Human).